Reading from the N-terminus, the 819-residue chain is Leucine--tRNA ligase (819 aa).

Positions 42–52 (PYPSGRLHMGH) match the 'HIGH' region motif. Residues 576–580 (KMSKS) carry the 'KMSKS' region motif. Residue Lys-579 participates in ATP binding.

The protein belongs to the class-I aminoacyl-tRNA synthetase family.

The protein resides in the cytoplasm. The enzyme catalyses tRNA(Leu) + L-leucine + ATP = L-leucyl-tRNA(Leu) + AMP + diphosphate. This Nitrosococcus oceani (strain ATCC 19707 / BCRC 17464 / JCM 30415 / NCIMB 11848 / C-107) protein is Leucine--tRNA ligase.